Consider the following 180-residue polypeptide: Large ribosomal subunit protein uL5 (180 aa).

It belongs to the universal ribosomal protein uL5 family. In terms of assembly, part of the 50S ribosomal subunit; part of the 5S rRNA/L5/L18/L25 subcomplex. Contacts the 5S rRNA and the P site tRNA. Forms a bridge to the 30S subunit in the 70S ribosome.

This is one of the proteins that bind and probably mediate the attachment of the 5S RNA into the large ribosomal subunit, where it forms part of the central protuberance. In the 70S ribosome it contacts protein S13 of the 30S subunit (bridge B1b), connecting the 2 subunits; this bridge is implicated in subunit movement. Contacts the P site tRNA; the 5S rRNA and some of its associated proteins might help stabilize positioning of ribosome-bound tRNAs. The sequence is that of Large ribosomal subunit protein uL5 from Cupriavidus metallidurans (strain ATCC 43123 / DSM 2839 / NBRC 102507 / CH34) (Ralstonia metallidurans).